The following is a 55-amino-acid chain: Large ribosomal subunit protein bL32c (55 aa).

Belongs to the bacterial ribosomal protein bL32 family.

The protein resides in the plastid. Its subcellular location is the chloroplast. The polypeptide is Large ribosomal subunit protein bL32c (Daucus carota (Wild carrot)).